A 262-amino-acid polypeptide reads, in one-letter code: Small ribosomal subunit protein uS2 (262 aa).

The disordered stretch occupies residues 224–246 (GNQGEDQDDAQEQQVAADKKADS).

It belongs to the universal ribosomal protein uS2 family.

The chain is Small ribosomal subunit protein uS2 from Lacticaseibacillus casei (strain BL23) (Lactobacillus casei).